A 451-amino-acid polypeptide reads, in one-letter code: MTHFAQAEPASLSHAATLETIFAPASGQGRSAVAIVRVSGPKAGFLLGALAGYCPEPRRATLAILHDPENGEALDEALVLWFPGPKSFTGEDCAEFHVHGGRAVMAGLLAALGRFEQVRPAEPGEFTRRALLNGKLDLAEVEGLADMIEAETEWQRRQALRQMRGALSRQAEMWRQALLEALSLAEAEIDFSDEADVPPETSRRVAALIEPVLADLRAELGQARAGERIREGLSIVIMGPPNAGKSTLLNALARREVAIVSEIAGTTRDLIEVHLDLKGCAVVLTDTAGLRDNADKIEQIGIARAYERGREADLVLWLSEAEAPVAPPENLGMEVWPVFTKADRVEPLENREGLAISATSGLHLGRLVEAIADFAGKLAPSGHAGLITRARHRQAFERAAAALDRCIREASPVELLAEDLRLAAQALLSLTGRIETEEILGEIFARFCIGK.

(6S)-5-formyl-5,6,7,8-tetrahydrofolate is bound by residues arginine 37, glutamate 95, and lysine 135. Residues 232–376 (GLSIVIMGPP…LVEAIADFAG (145 aa)) form the TrmE-type G domain. Asparagine 242 lines the K(+) pocket. Residues 242-247 (NAGKST), 261-267 (SEIAGTT), and 286-289 (DTAG) each bind GTP. Residue serine 246 coordinates Mg(2+). 3 residues coordinate K(+): serine 261, isoleucine 263, and threonine 266. Threonine 267 serves as a coordination point for Mg(2+). Lysine 451 is a (6S)-5-formyl-5,6,7,8-tetrahydrofolate binding site.

Belongs to the TRAFAC class TrmE-Era-EngA-EngB-Septin-like GTPase superfamily. TrmE GTPase family. In terms of assembly, homodimer. Heterotetramer of two MnmE and two MnmG subunits. The cofactor is K(+).

It is found in the cytoplasm. In terms of biological role, exhibits a very high intrinsic GTPase hydrolysis rate. Involved in the addition of a carboxymethylaminomethyl (cmnm) group at the wobble position (U34) of certain tRNAs, forming tRNA-cmnm(5)s(2)U34. The protein is tRNA modification GTPase MnmE of Beijerinckia indica subsp. indica (strain ATCC 9039 / DSM 1715 / NCIMB 8712).